Here is a 312-residue protein sequence, read N- to C-terminus: RNA binding protein fox-1 homolog 3 (312 aa).

Pro residues predominate over residues 1 to 29 (MAQPYPPAQYPPPPQNGIPAEYAPPPPHP). Residues 1 to 104 (MAQPYPPAQY…KQQPKRLHVS (104 aa)) are disordered. Positions 49–87 (TPAQTHPEQPGSEASTQPIAGTQTVPQTDEAAQTDSQPL) are enriched in polar residues. Residues 100-175 (RLHVSNIPFR…RKIEVNNATA (76 aa)) enclose the RRM domain. R223 carries the asymmetric dimethylarginine; alternate modification. Residue R223 is modified to Omega-N-methylarginine; alternate. Position 272 is an asymmetric dimethylarginine (R272).

It is found in the nucleus. The protein resides in the cytoplasm. Pre-mRNA alternative splicing regulator. Regulates alternative splicing of RBFOX2 to enhance the production of mRNA species that are targeted for nonsense-mediated decay (NMD). The polypeptide is RNA binding protein fox-1 homolog 3 (RBFOX3) (Homo sapiens (Human)).